Consider the following 235-residue polypeptide: Ribonuclease HII (235 aa).

The 190-residue stretch at 23-212 (GLVAGVDEAG…VAHVVSIARM (190 aa)) folds into the RNase H type-2 domain. Positions 29, 30, and 121 each coordinate a divalent metal cation.

The protein belongs to the RNase HII family. Requires Mn(2+) as cofactor. The cofactor is Mg(2+).

The protein localises to the cytoplasm. The enzyme catalyses Endonucleolytic cleavage to 5'-phosphomonoester.. Endonuclease that specifically degrades the RNA of RNA-DNA hybrids. This Delftia acidovorans (strain DSM 14801 / SPH-1) protein is Ribonuclease HII.